Consider the following 227-residue polypeptide: Small heat shock protein hspG3 (227 aa).

The region spanning 31 to 227 (NKRVDIIPSM…SSNTIKININ (197 aa)) is the sHSP domain. Residues 119–164 (QQQQLENSNKENDEPSIEEFEEDVKSKSELNKTTLNTTENKDEDKT) form a disordered region.

Belongs to the small heat shock protein (HSP20) family.

This is Small heat shock protein hspG3 (hspG3) from Dictyostelium discoideum (Social amoeba).